A 439-amino-acid polypeptide reads, in one-letter code: Xaa-Pro dipeptidase (439 aa).

Mn(2+)-binding residues include aspartate 244, aspartate 255, histidine 335, glutamate 380, and glutamate 419.

The protein belongs to the peptidase M24B family. Bacterial-type prolidase subfamily. Requires Mn(2+) as cofactor.

It carries out the reaction Xaa-L-Pro dipeptide + H2O = an L-alpha-amino acid + L-proline. Its function is as follows. Splits dipeptides with a prolyl residue in the C-terminal position. The sequence is that of Xaa-Pro dipeptidase from Shewanella sediminis (strain HAW-EB3).